The sequence spans 213 residues: Alkylbase DNA glycosidase-like protein mag2 (213 aa).

Residues Lys-53, Leu-54, Ser-61, His-91, Gly-94, Ser-96, Lys-97, Lys-99, Glu-102, Lys-137, Gly-138, Lys-140, Thr-143, Ser-163, and Thr-164 each coordinate DNA.

It belongs to the alkylbase DNA glycosidase AlkA family.

It localises to the nucleus. Alkylbase DNA glycosidase-like protein that shows no DNA glycosylase activity for alkylated bases. The molecular role of mag2 appears to be abasic (AP) site recognition and protection, while possibly facilitating damage signaling by structurally sculpting the DNA substrate. Stimulates AP site binding to mismatch repair protein mutS. This is Alkylbase DNA glycosidase-like protein mag2 from Schizosaccharomyces pombe (strain 972 / ATCC 24843) (Fission yeast).